We begin with the raw amino-acid sequence, 1069 residues long: Protogenin B (1069 aa).

The N-terminal stretch at M1–G26 is a signal peptide. The Extracellular segment spans residues F27 to S936. Ig-like domains are found at residues L30–T117, L122–V208, P221–T308, and P312–I396. Cystine bridges form between C51–C100 and C143–C191. N81, N88, N180, and N229 each carry an N-linked (GlcNAc...) asparagine glycan. A disulfide bridge links C242 with C290. N-linked (GlcNAc...) asparagine glycosylation is found at N299 and N306. The segment at K317–E336 is disordered. The cysteines at positions 333 and 380 are disulfide-linked. Fibronectin type-III domains are found at residues A406–D500, P502–T601, P608–T701, P711–E804, and P809–K904. N-linked (GlcNAc...) asparagine glycosylation is found at N458, N473, and N560. Polar residues predominate over residues P590–T605. A disordered region spans residues P590–A609. N618, N720, and N834 each carry an N-linked (GlcNAc...) asparagine glycan. A helical membrane pass occupies residues G937–L957. The Cytoplasmic portion of the chain corresponds to S958–A1069.

The protein belongs to the immunoglobulin superfamily. DCC family. Initially expressed in the ventral forebrain and ventral spinal cord. Later, also expressed in the midbrain and in parts of the diencephalon and hindbrain.

The protein resides in the membrane. In terms of biological role, may play a role in anteroposterior axis elongation. The sequence is that of Protogenin B from Danio rerio (Zebrafish).